Here is a 149-residue protein sequence, read N- to C-terminus: Oligosaccharyltransferase complex subunit OSTC (149 aa).

Over M1–T32 the chain is Cytoplasmic. Residues V33–I53 traverse the membrane as a helical segment. The Extracellular segment spans residues V54–Y83. A helical transmembrane segment spans residues I84–L104. Topologically, residues D105–R117 are cytoplasmic. The helical transmembrane segment at F118–F138 threads the bilayer. Over M139 to G149 the chain is Extracellular.

This sequence belongs to the OSTC family. In terms of assembly, component of STT3A-containing oligosaccharyl transferase (OST-A) complex. STT3A-containing complex assembly occurs through the formation of 3 subcomplexes. Subcomplex 1 contains RPN1 and TMEM258, subcomplex 2 contains the STT3A-specific subunits STT3A, DC2/OSTC, and KCP2 as well as the core subunit OST4, and subcomplex 3 contains RPN2, DAD1, and OST48. The OST-A complex can form stable complexes with the Sec61 complex or with both the Sec61 and TRAP complexes. Interacts with PSEN1 and NCSTN; indicative for an association with the gamma-secretase complex.

It localises to the endoplasmic reticulum. The protein resides in the membrane. Its pathway is protein modification; protein glycosylation. Subunit of STT3A-containing oligosaccharyl transferase (OST-A) complex that catalyzes the initial transfer of a defined glycan (Glc(3)Man(9)GlcNAc(2) in eukaryotes) from the lipid carrier dolichol-pyrophosphate to an asparagine residue within an Asn-X-Ser/Thr consensus motif in nascent polypeptide chains, the first step in protein N-glycosylation. N-glycosylation occurs cotranslationally and the complex associates with the Sec61 complex at the channel-forming translocon complex that mediates protein translocation across the endoplasmic reticulum (ER). Within the OST-A complex, acts as an adapter that anchors the OST-A complex to the Sec61 complex. May be involved in N-glycosylation of APP (amyloid-beta precursor protein). Can modulate gamma-secretase cleavage of APP by enhancing endoprotelysis of PSEN1. The polypeptide is Oligosaccharyltransferase complex subunit OSTC (Homo sapiens (Human)).